Here is a 116-residue protein sequence, read N- to C-terminus: Large ribosomal subunit protein uL18 (116 aa).

This sequence belongs to the universal ribosomal protein uL18 family. As to quaternary structure, part of the 50S ribosomal subunit; part of the 5S rRNA/L5/L18/L25 subcomplex. Contacts the 5S and 23S rRNAs.

Functionally, this is one of the proteins that bind and probably mediate the attachment of the 5S RNA into the large ribosomal subunit, where it forms part of the central protuberance. This chain is Large ribosomal subunit protein uL18, found in Mycoplasma pneumoniae (strain ATCC 29342 / M129 / Subtype 1) (Mycoplasmoides pneumoniae).